A 1805-amino-acid chain; its full sequence is Cytadherence high molecular weight protein 2 (1805 aa).

4 coiled-coil regions span residues 28–838 (EKNR…NNAF), 914–1591 (ELKI…LRTQ), 1632–1723 (DNTL…QHNT), and 1777–1804 (NITK…KAAS).

Its function is as follows. Component of the cytoskeleton-like structure which stabilizes the shape of the wall-less Mycoplasma. This cytoskeleton-like network of accessory proteins containing HMW proteins 1 to 5 allows the proper anchoring of cytadhesin proteins in the mycoplasmal membrane at the attachment organelle. The chain is Cytadherence high molecular weight protein 2 (hmw2) from Mycoplasma genitalium (strain ATCC 33530 / DSM 19775 / NCTC 10195 / G37) (Mycoplasmoides genitalium).